The following is a 339-amino-acid chain: tRNA N6-adenosine threonylcarbamoyltransferase (339 aa).

Fe cation-binding residues include histidine 111 and histidine 115. Residues 134–138 (LVSGG), aspartate 167, glycine 180, and asparagine 270 each bind substrate. Aspartate 298 provides a ligand contact to Fe cation.

The protein belongs to the KAE1 / TsaD family. The cofactor is Fe(2+).

It localises to the cytoplasm. The catalysed reaction is L-threonylcarbamoyladenylate + adenosine(37) in tRNA = N(6)-L-threonylcarbamoyladenosine(37) in tRNA + AMP + H(+). Functionally, required for the formation of a threonylcarbamoyl group on adenosine at position 37 (t(6)A37) in tRNAs that read codons beginning with adenine. Is involved in the transfer of the threonylcarbamoyl moiety of threonylcarbamoyl-AMP (TC-AMP) to the N6 group of A37, together with TsaE and TsaB. TsaD likely plays a direct catalytic role in this reaction. This is tRNA N6-adenosine threonylcarbamoyltransferase from Alkalilimnicola ehrlichii (strain ATCC BAA-1101 / DSM 17681 / MLHE-1).